The primary structure comprises 210 residues: ATP-dependent Clp protease proteolytic subunit (210 aa).

The active-site Nucleophile is the Ser-106. The active site involves His-131.

This sequence belongs to the peptidase S14 family. As to quaternary structure, fourteen ClpP subunits assemble into 2 heptameric rings which stack back to back to give a disk-like structure with a central cavity, resembling the structure of eukaryotic proteasomes.

The protein resides in the cytoplasm. The catalysed reaction is Hydrolysis of proteins to small peptides in the presence of ATP and magnesium. alpha-casein is the usual test substrate. In the absence of ATP, only oligopeptides shorter than five residues are hydrolyzed (such as succinyl-Leu-Tyr-|-NHMec, and Leu-Tyr-Leu-|-Tyr-Trp, in which cleavage of the -Tyr-|-Leu- and -Tyr-|-Trp bonds also occurs).. Functionally, cleaves peptides in various proteins in a process that requires ATP hydrolysis. Has a chymotrypsin-like activity. Plays a major role in the degradation of misfolded proteins. The polypeptide is ATP-dependent Clp protease proteolytic subunit (Rhodopseudomonas palustris (strain BisB18)).